Consider the following 634-residue polypeptide: DNA-directed RNA polymerase subunit gamma (634 aa).

Positions 74, 76, 89, and 92 each coordinate Zn(2+). Mg(2+) is bound by residues D471, D473, and D475.

It belongs to the RNA polymerase beta' chain family. RpoC1 subfamily. In terms of assembly, in cyanobacteria the RNAP catalytic core is composed of 2 alpha, 1 beta, 1 beta', 1 gamma and 1 omega subunit. When a sigma factor is associated with the core the holoenzyme is formed, which can initiate transcription. Mg(2+) serves as cofactor. Requires Zn(2+) as cofactor.

The enzyme catalyses RNA(n) + a ribonucleoside 5'-triphosphate = RNA(n+1) + diphosphate. DNA-dependent RNA polymerase catalyzes the transcription of DNA into RNA using the four ribonucleoside triphosphates as substrates. The chain is DNA-directed RNA polymerase subunit gamma from Prochlorococcus marinus (strain MIT 9313).